The primary structure comprises 126 residues: Protein C10 (126 aa).

Position 2 is an N-acetylalanine (alanine 2).

It belongs to the UPF0456 family. In terms of tissue distribution, ubiquitously expressed, with higher expression in lung.

The protein resides in the cytoplasm. In terms of biological role, in brain, may be required for corpus callosum development. The chain is Protein C10 (Grcc10) from Mus musculus (Mouse).